The sequence spans 99 residues: Integration host factor subunit alpha (99 aa).

A disordered region spans residues 49–71 (FGNFDLRDKNQRPGRNPKTGEDI).

This sequence belongs to the bacterial histone-like protein family. In terms of assembly, heterodimer of an alpha and a beta chain.

In terms of biological role, this protein is one of the two subunits of integration host factor, a specific DNA-binding protein that functions in genetic recombination as well as in transcriptional and translational control. The polypeptide is Integration host factor subunit alpha (Shewanella frigidimarina (strain NCIMB 400)).